The sequence spans 182 residues: GDASHAVDHPIGGHPEHEHDLREEEGPLIFPMKDLPGTPGTVGGLALRMGQFIFAAASVVIMVTSDEFINFTAFCYLAAAMALQFLWSFVLATIDVYALLIKRGLPNSILLSLFVVGDWVTATLSLAAACSTAGITVLFDKDLNYCDQMHCRRYQLSATMAFFSWVLIAISSLITLLLLVSE.

Residues 1–20 (GDASHAVDHPIGGHPEHEHD) are disordered. The Cytoplasmic segment spans residues 1 to 41 (GDASHAVDHPIGGHPEHEHDLREEEGPLIFPMKDLPGTPGT). Residues 42–62 (VGGLALRMGQFIFAAASVVIM) traverse the membrane as a helical segment. Topologically, residues 63–73 (VTSDEFINFTA) are extracellular. N-linked (GlcNAc...) asparagine glycosylation occurs at Asn70. A helical transmembrane segment spans residues 74 to 94 (FCYLAAAMALQFLWSFVLATI). The Cytoplasmic segment spans residues 95–108 (DVYALLIKRGLPNS). A helical membrane pass occupies residues 109–129 (ILLSLFVVGDWVTATLSLAAA). Residues 130–159 (CSTAGITVLFDKDLNYCDQMHCRRYQLSAT) lie on the Extracellular side of the membrane. A helical transmembrane segment spans residues 160–180 (MAFFSWVLIAISSLITLLLLV). Over 181–182 (SE) the chain is Cytoplasmic.

It belongs to the Casparian strip membrane proteins (CASP) family. Homodimer and heterodimers.

The protein resides in the cell membrane. The chain is CASP-like protein 5B1 from Picea sitchensis (Sitka spruce).